The following is a 372-amino-acid chain: NAD(P)H-quinone oxidoreductase subunit 1 (372 aa).

8 helical membrane passes run 27-47 (LLWL…GVLV), 97-117 (LLFT…WLII), 128-148 (VGIG…GLLM), 176-196 (LALA…IDIV), 204-224 (FLSW…ICAL), 270-290 (LLVS…ELIA), 308-328 (SLGI…AILL), and 351-371 (ISLV…FAFG).

The protein belongs to the complex I subunit 1 family. As to quaternary structure, NDH-1 is composed of at least 11 different subunits.

The protein localises to the cellular thylakoid membrane. It carries out the reaction a plastoquinone + NADH + (n+1) H(+)(in) = a plastoquinol + NAD(+) + n H(+)(out). The enzyme catalyses a plastoquinone + NADPH + (n+1) H(+)(in) = a plastoquinol + NADP(+) + n H(+)(out). Functionally, NDH-1 shuttles electrons from an unknown electron donor, via FMN and iron-sulfur (Fe-S) centers, to quinones in the respiratory and/or the photosynthetic chain. The immediate electron acceptor for the enzyme in this species is believed to be plastoquinone. Couples the redox reaction to proton translocation, and thus conserves the redox energy in a proton gradient. The polypeptide is NAD(P)H-quinone oxidoreductase subunit 1 (Prochlorococcus marinus (strain SARG / CCMP1375 / SS120)).